A 1426-amino-acid chain; its full sequence is Nephrocystin-4 (1426 aa).

Ser-142 is subject to Phosphoserine. Disordered stretches follow at residues 450–536 and 896–935; these read GSEE…SPAQ and RQGK…GRRG. A compositionally biased stretch (pro residues) spans 474–486; it reads KPPTSPSSPPAPV. A compositionally biased stretch (polar residues) spans 503-536; the sequence is SISQLAASPRSPTQHCLARPTSQLPHGSQASPAQ. The sufficient for basal bodies localization stretch occupies residues 823–1426; the sequence is LTLANVGHPC…EAFCVKVIYQ (604 aa).

This sequence belongs to the NPHP4 family. Interacts with NPHP1. Interacts with NPHP1 and RPGRIP1L/NPHP8; NPHP1, NPHP4 and RPGRIP1L are proposed to form a functional NPHP1-4-8 module localized to cell-cell contacts and the ciliary transition zone; NPHP4 mediates the interaction between NPHP1 and RPGRIP1L. Interacts with IQCB1/NPHP5; the interaction likely requires additional interactors. Interacts with RPGRIP1, CEP164, JADE1, PALS1, INADL, PARD6A, INVS, DVL2, LATS1. Interacts with INTU; INTU mediates the interaction between NPHP4 and DAAM1. Interacts with SPATA7. Expressed in kidney, skeletal muscle, heart and liver, and to a lesser extent in brain and lung.

It is found in the cytoplasm. It localises to the cytoskeleton. The protein resides in the cilium basal body. The protein localises to the microtubule organizing center. Its subcellular location is the centrosome. It is found in the cell junction. It localises to the tight junction. The protein resides in the nucleus. Functionally, involved in the organization of apical junctions; the function is proposed to implicate a NPHP1-4-8 module. Does not seem to be strictly required for ciliogenesis. Required for building functional cilia. Involved in the organization of the subapical actin network in multiciliated epithelial cells. Seems to recruit INT to basal bodies of motile cilia which subsequently interacts with actin-modifying proteins such as DAAM1. In cooperation with INVS may down-regulate the canonical Wnt pathway and promote the Wnt-PCP pathway by regulating expression and subcellular location of disheveled proteins. Stabilizes protein levels of JADE1 and promotes its translocation to the nucleus leading to cooperative inhibition of canonical Wnt signaling. Acts as a negative regulator of the hippo pathway by association with LATS1 and modifying LATS1-dependent phosphorylation and localization of WWTR1/TAZ. The sequence is that of Nephrocystin-4 (NPHP4) from Homo sapiens (Human).